We begin with the raw amino-acid sequence, 699 residues long: uncharacterized protein (699 aa).

3 disordered regions span residues 175-208 (PTLG…ASLS), 289-364 (PTAK…EEPD), and 539-603 (RAKE…KEYL). Over residues 183–194 (PSKHGDHSDSKT) the composition is skewed to basic and acidic residues. Residues 195–208 (YESPISNSQAASLS) show a composition bias toward polar residues. A compositionally biased stretch (basic residues) spans 308–322 (SKHKKRPKRLSKFKQ). The span at 323–338 (AKLETKKSGNKDHATS) shows a compositional bias: basic and acidic residues. 2 stretches are compositionally biased toward polar residues: residues 339–360 (SEKL…SSSI) and 548–573 (HSNA…NTKL). Over residues 574–603 (NPKEEDKSTVESELKAPPKEKSSETSKEYL) the composition is skewed to basic and acidic residues.

It localises to the cytoplasm. This is an uncharacterized protein from Schizosaccharomyces pombe (strain 972 / ATCC 24843) (Fission yeast).